We begin with the raw amino-acid sequence, 126 residues long: Small ribosomal subunit protein uS13 (126 aa).

A disordered region spans residues 92-126 (HRRGLPVRGQRTKTNARTRKGPKRTVAGKKKAGRK).

It belongs to the universal ribosomal protein uS13 family. In terms of assembly, part of the 30S ribosomal subunit. Forms a loose heterodimer with protein S19. Forms two bridges to the 50S subunit in the 70S ribosome.

In terms of biological role, located at the top of the head of the 30S subunit, it contacts several helices of the 16S rRNA. In the 70S ribosome it contacts the 23S rRNA (bridge B1a) and protein L5 of the 50S subunit (bridge B1b), connecting the 2 subunits; these bridges are implicated in subunit movement. Contacts the tRNAs in the A and P-sites. The polypeptide is Small ribosomal subunit protein uS13 (Kineococcus radiotolerans (strain ATCC BAA-149 / DSM 14245 / SRS30216)).